The sequence spans 1169 residues: Phospholipid-transporting ATPase IF (1169 aa).

Topologically, residues 1 to 47 (LGFDPPHQSDTRTIYIANRFPQNGLYTPQKFIDNRIISSKYTVWNFV) are cytoplasmic. The chain crosses the membrane as a helical span at residues 48–69 (PKNLFEQFRRVANFYFLIIFLV). Topologically, residues 70–74 (QLMID) are extracellular. Residues 75–96 (TPTSPITSGLPLFFVITVTAIK) form a helical membrane-spanning segment. The Cytoplasmic segment spans residues 97 to 281 (QGYEDWLRHN…SAVEKSMNTF (185 aa)). The helical transmembrane segment at 282–303 (LIIYLIILISEAIISTILKYTW) threads the bilayer. The Extracellular segment spans residues 304 to 333 (QAEEKWDEPWYNQKTEHQRNSSKILRFISD). The chain crosses the membrane as a helical span at residues 334-351 (FLAFLVLYNFIIPISLYV). The Cytoplasmic portion of the chain corresponds to 352 to 868 (TVEMQKFLGS…HGHFYYIRIA (517 aa)). Residue Asp-399 is the 4-aspartylphosphate intermediate of the active site. ATP-binding residues include Asp-399, Lys-400, Thr-401, Glu-523, Phe-564, Lys-587, Arg-618, Thr-698, Gly-699, Asp-700, Arg-786, and Lys-792. Asp-399 contributes to the Mg(2+) binding site. Thr-401 provides a ligand contact to Mg(2+). The interval 794-802 (KVIRLIKIS) is required for binding to the RING-finger of HLTF. Asp-813 contacts Mg(2+). ATP contacts are provided by Asn-816 and Asp-817. Residue Asp-817 coordinates Mg(2+). The chain crosses the membrane as a helical span at residues 869–890 (TLVQYFFYKNVCFITPQFLYQF). At 891 to 902 (YCLFSQQTLYDS) the chain is on the extracellular side. The helical transmembrane segment at 903 to 922 (VYLTLYNICFTSLPILIYSL) threads the bilayer. Topologically, residues 923 to 952 (LEQHIDPHILQNKPTLYRDISKNRLLSIKT) are cytoplasmic. The helical transmembrane segment at 953-974 (FLYWTILGFSRSFIFLFGSYFL) threads the bilayer. Topologically, residues 975 to 989 (IGKDASLLGNGQMFG) are extracellular. The chain crosses the membrane as a helical span at residues 990 to 1012 (NWTFGTLVFTVMVITVTVKMALE). The Cytoplasmic segment spans residues 1013–1017 (THFWT). Residues 1018–1039 (WINHLVTWGSIIFYFVFSLFYG) traverse the membrane as a helical segment. Topologically, residues 1040–1057 (GILWPFLGSQNMYFVFIQ) are extracellular. The helical transmembrane segment at 1058–1082 (LVSSGSAWFAIILMVVTCLFLDVMK) threads the bilayer. At 1083–1169 (KVFDRQLHPT…TLSTMDSSTC (87 aa)) the chain is on the cytoplasmic side. Position 1146 is a phosphoserine (Ser-1146).

The protein belongs to the cation transport ATPase (P-type) (TC 3.A.3) family. Type IV subfamily. As to quaternary structure, component of a P4-ATPase flippase complex which consists of a catalytic alpha subunit ATP11B and an accessory beta subunit TMEM30A. In terms of assembly, interacts with HLTF (via the RING-finger). Mg(2+) is required as a cofactor. In terms of tissue distribution, ubiquitously expressed.

It localises to the recycling endosome membrane. The protein localises to the early endosome. Its subcellular location is the endoplasmic reticulum. It is found in the golgi apparatus. The protein resides in the trans-Golgi network. It localises to the nucleus inner membrane. It carries out the reaction ATP + H2O + phospholipidSide 1 = ADP + phosphate + phospholipidSide 2.. The catalysed reaction is a 1,2-diacyl-sn-glycero-3-phospho-L-serine(out) + ATP + H2O = a 1,2-diacyl-sn-glycero-3-phospho-L-serine(in) + ADP + phosphate + H(+). It catalyses the reaction a 1,2-diacyl-sn-glycero-3-phosphoethanolamine(out) + ATP + H2O = a 1,2-diacyl-sn-glycero-3-phosphoethanolamine(in) + ADP + phosphate + H(+). Its function is as follows. Catalytic component of a P4-ATPase flippase complex which catalyzes the hydrolysis of ATP coupled to the transport of aminophospholipids, phosphatidylserines (PS) and phosphatidylethanolamines (PE), from the outer to the inner leaflet of intracellular membranes. May contribute to the maintenance of membrane lipid asymmetry in endosome compartment. In terms of biological role, appears to play a role in the subnuclear trafficking of transcription factors with RING motifs. This chain is Phospholipid-transporting ATPase IF (ATP11B), found in Oryctolagus cuniculus (Rabbit).